The primary structure comprises 365 residues: Peptidyl-prolyl cis-trans isomerase FKBP42 (365 aa).

A compositionally biased stretch (basic and acidic residues) spans 1 to 15 (MDESLEHQTQTHDQE). The tract at residues 1-44 (MDESLEHQTQTHDQESEIVTEGSAVVHSEPSQEGNVPPKVDSEA) is disordered. The interaction with MDR1/PGP1 stretch occupies residues 1–163 (MDESLEHQTQ…EVIGFDETKE (163 aa)). One can recognise a PPIase FKBP-type domain in the interval 67–159 (YSTCFLHYRA…LYEVEVIGFD (93 aa)). Residues 163–337 (EGKARSDMTV…GKDEGGAKSK (175 aa)) form an interaction with MRP1 region. TPR repeat units follow at residues 179-212 (ADRR…MGDD), 230-263 (NPCH…EEKN), and 264-297 (PKAL…APDD). The calmodulin-binding stretch occupies residues 310–326 (QEKALYQKQKEMYKGIF). The helical; Anchor for type IV membrane protein transmembrane segment at 338-357 (SLFWLIVLWQWFVSLFSRIF) threads the bilayer.

The protein belongs to the FKBP-type PPIase family. In terms of assembly, interacts with calmodulin (CaM), MRP1, MRP2, MDR1/PGP1, MDR11/PGP19 and SHD/HSP90. Interacts with 1-naphthylphthalamic acid (NPA).

The protein resides in the cell membrane. It localises to the vacuole membrane. The protein localises to the endoplasmic reticulum. The catalysed reaction is [protein]-peptidylproline (omega=180) = [protein]-peptidylproline (omega=0). Its function is as follows. PPIases accelerate the folding of proteins. It catalyzes the cis-trans isomerization of proline imidic peptide bonds in oligopeptides. Modulates the uptake of MRP substrates into the vacuole; reduces metolachlor-GS (MOC-GS) and enhances 17-beta-estradiol 17-(beta-D-glucuronide) (E(2)17betaG) uptake. Regulates cell elongation and orientation. Functions as a positive regulator of PGP1-mediated auxin transport. Confers drug modulation of PGP1 efflux activity as interaction with NPA or flavonol quercetin prevents its physical and functional interaction with PGP1. Required for the proper localization of auxin-related ABCB transporters. Plays a role in brassinosteroid (BR) signaling pathway. Required for seed development by promoting stamen elongation and, to a lesser extent, anther dehiscence and pollen maturation, probably as a chaperone helping ABCB1 and ABCB19 auxin transporters localization and activation. Involved in auxin signaling in nectaries to promote starch accumulation to attract visiting pollinators. This is Peptidyl-prolyl cis-trans isomerase FKBP42 from Arabidopsis thaliana (Mouse-ear cress).